Reading from the N-terminus, the 408-residue chain is Imidazolonepropionase (408 aa).

Residues His-73 and His-75 each coordinate Fe(3+). Residues His-73 and His-75 each coordinate Zn(2+). Residues Arg-82, Tyr-145, and His-178 each contribute to the 4-imidazolone-5-propanoate site. Tyr-145 contacts N-formimidoyl-L-glutamate. Position 243 (His-243) interacts with Fe(3+). Zn(2+) is bound at residue His-243. 4-imidazolone-5-propanoate is bound at residue Gln-246. Residue Asp-318 coordinates Fe(3+). Position 318 (Asp-318) interacts with Zn(2+). N-formimidoyl-L-glutamate is bound by residues Asn-320 and Gly-322. Residue Ser-323 participates in 4-imidazolone-5-propanoate binding.

The protein belongs to the metallo-dependent hydrolases superfamily. HutI family. It depends on Zn(2+) as a cofactor. Requires Fe(3+) as cofactor.

The protein localises to the cytoplasm. The enzyme catalyses 4-imidazolone-5-propanoate + H2O = N-formimidoyl-L-glutamate. It functions in the pathway amino-acid degradation; L-histidine degradation into L-glutamate; N-formimidoyl-L-glutamate from L-histidine: step 3/3. Its function is as follows. Catalyzes the hydrolytic cleavage of the carbon-nitrogen bond in imidazolone-5-propanoate to yield N-formimidoyl-L-glutamate. It is the third step in the universal histidine degradation pathway. The polypeptide is Imidazolonepropionase (Shewanella putrefaciens (strain CN-32 / ATCC BAA-453)).